A 370-amino-acid chain; its full sequence is Putrescine-binding periplasmic protein PotF (370 aa).

The N-terminal stretch at 1 to 26 is a signal peptide; the sequence is MTALNKKWLSGLVAGALMAVSVGTLA. A putrescine-binding site is contributed by serine 38. Cysteine 175 and cysteine 239 are disulfide-bonded. Residues aspartate 247 and aspartate 278 each coordinate putrescine.

Belongs to the bacterial solute-binding protein PotD/PotF family. As to quaternary structure, the complex is composed of two ATP-binding proteins (PotG), two transmembrane proteins (PotH and PotI) and a solute-binding protein (PotF).

Its subcellular location is the periplasm. Transport is feedback inhibited by intracellular polyamines. Its function is as follows. Part of the ABC transporter complex PotFGHI involved in putrescine uptake. Binds putrescine. Imports putrescine for maintenance of the optimal concentration of polyamines necessary for cell growth in the presence of glucose. The polypeptide is Putrescine-binding periplasmic protein PotF (Escherichia coli (strain K12)).